The primary structure comprises 820 residues: Penicillin-binding protein 1A (820 aa).

Residues 1–120 (MNSDGRHHQS…PAGRLPQPRV (120 aa)) are disordered. The span at 41-53 (TDDRSAPHADSIE) shows a compositional bias: basic and acidic residues. Residues 139–159 (LTAAVVILLPMVTFTMAYLIV) form a helical membrane-spanning segment. The tract at residues 180–360 (GSEIAKIVPP…RWNWVLDGMV (181 aa)) is transglycosylase. Residue glutamate 213 is the Proton donor; for transglycosylase activity of the active site. Residues 453–743 (AVVSIDPHNG…PSDIWKATMD (291 aa)) form a transpeptidase region. Residue serine 487 is the Acyl-ester intermediate; for transpeptidase activity of the active site. Low complexity predominate over residues 792–804 (ITIPIGPPTTITL). The disordered stretch occupies residues 792 to 820 (ITIPIGPPTTITLAPPPPAPPAATPTPPP). Residues 805-820 (APPPPAPPAATPTPPP) are compositionally biased toward pro residues.

The protein in the N-terminal section; belongs to the glycosyltransferase 51 family. This sequence in the C-terminal section; belongs to the transpeptidase family. Interacts with RipA via its transpeptidase domain (residues 561-820).

The protein localises to the cell membrane. It catalyses the reaction [GlcNAc-(1-&gt;4)-Mur2Ac(oyl-L-Ala-gamma-D-Glu-L-Lys-D-Ala-D-Ala)](n)-di-trans,octa-cis-undecaprenyl diphosphate + beta-D-GlcNAc-(1-&gt;4)-Mur2Ac(oyl-L-Ala-gamma-D-Glu-L-Lys-D-Ala-D-Ala)-di-trans,octa-cis-undecaprenyl diphosphate = [GlcNAc-(1-&gt;4)-Mur2Ac(oyl-L-Ala-gamma-D-Glu-L-Lys-D-Ala-D-Ala)](n+1)-di-trans,octa-cis-undecaprenyl diphosphate + di-trans,octa-cis-undecaprenyl diphosphate + H(+). The catalysed reaction is Preferential cleavage: (Ac)2-L-Lys-D-Ala-|-D-Ala. Also transpeptidation of peptidyl-alanyl moieties that are N-acyl substituents of D-alanine.. Its pathway is cell wall biogenesis; peptidoglycan biosynthesis. In terms of biological role, cell wall formation. Synthesis of cross-linked peptidoglycan from the lipid intermediates. The enzyme has a penicillin-insensitive transglycosylase N-terminal domain (formation of linear glycan strands) and a penicillin-sensitive transpeptidase C-terminal domain (cross-linking of the peptide subunits). Has little peptidoglycan hydrolytic activity; however it inhibits the synergistic peptidoglycan hydrolysis of RipA plus RpfB. The polypeptide is Penicillin-binding protein 1A (ponA1) (Mycobacterium tuberculosis (strain ATCC 25618 / H37Rv)).